A 370-amino-acid polypeptide reads, in one-letter code: Dihydroorotate dehydrogenase (quinone) (370 aa).

Residues 67 to 71 (AGFDK) and T91 contribute to the FMN site. K71 serves as a coordination point for substrate. 116 to 120 (NRMGF) contributes to the substrate binding site. Positions 146 and 179 each coordinate FMN. A substrate-binding site is contributed by N179. S182 acts as the Nucleophile in catalysis. Residue N184 coordinates substrate. The FMN site is built by K222 and T250. 251-252 (NT) contributes to the substrate binding site. Residues G276, G305, and 326–327 (YS) each bind FMN.

The protein belongs to the dihydroorotate dehydrogenase family. Type 2 subfamily. Monomer. The cofactor is FMN.

Its subcellular location is the cell membrane. The enzyme catalyses (S)-dihydroorotate + a quinone = orotate + a quinol. It participates in pyrimidine metabolism; UMP biosynthesis via de novo pathway; orotate from (S)-dihydroorotate (quinone route): step 1/1. Functionally, catalyzes the conversion of dihydroorotate to orotate with quinone as electron acceptor. This chain is Dihydroorotate dehydrogenase (quinone), found in Streptomyces griseus subsp. griseus (strain JCM 4626 / CBS 651.72 / NBRC 13350 / KCC S-0626 / ISP 5235).